A 40-amino-acid chain; its full sequence is Protamine-2 (40 aa).

A disordered region spans residues 1–40; the sequence is MPPRRKRVSSAPRRRRRTYRRTTAHKHQERPVHRRRRRRH.

As to expression, testis.

The protein localises to the nucleus. It localises to the chromosome. Functionally, protamines substitute for histones in the chromatin of sperm during the haploid phase of spermatogenesis. They compact sperm DNA into a highly condensed, stable and inactive complex. The polypeptide is Protamine-2 (PBP2) (Bufo japonicus (Japanese common toad)).